The following is a 197-amino-acid chain: Small ribosomal subunit protein uS4c (197 aa).

Positions 92–153 (MRLDAVVYRL…APIVEHAKTF (62 aa)) constitute an S4 RNA-binding domain.

Belongs to the universal ribosomal protein uS4 family. Part of the 30S ribosomal subunit. Contacts protein S5. The interaction surface between S4 and S5 is involved in control of translational fidelity.

Its subcellular location is the plastid. It localises to the chloroplast. In terms of biological role, one of the primary rRNA binding proteins, it binds directly to 16S rRNA where it nucleates assembly of the body of the 30S subunit. With S5 and S12 plays an important role in translational accuracy. This Ostreococcus tauri protein is Small ribosomal subunit protein uS4c (rps4).